Consider the following 390-residue polypeptide: Pyruvate dehydrogenase E1 component subunit alpha-1, mitochondrial (390 aa).

The N-terminal 15 residues, 1-15 (MAAAILLRRVPPARA), are a transit peptide targeting the mitochondrion. 10 residues coordinate pyruvate: H91, Y117, R118, G166, V168, D197, G198, A199, N226, and Y228. Thiamine diphosphate contacts are provided by Y117, R118, G166, V168, D197, G198, A199, and N226. A Mg(2+)-binding site is contributed by D197. Positions 226 and 228 each coordinate Mg(2+). Residue H292 participates in thiamine diphosphate binding. Residues 293-312 (SMSDPGSTYRTRDEISGVRQ) are disordered. The segment covering 302-312 (RTRDEISGVRQ) has biased composition (basic and acidic residues).

In terms of assembly, tetramer of 2 alpha and 2 beta subunits. The cofactor is thiamine diphosphate. Mg(2+) is required as a cofactor.

It is found in the mitochondrion matrix. It catalyses the reaction N(6)-[(R)-lipoyl]-L-lysyl-[protein] + pyruvate + H(+) = N(6)-[(R)-S(8)-acetyldihydrolipoyl]-L-lysyl-[protein] + CO2. The pyruvate dehydrogenase complex catalyzes the overall conversion of pyruvate to acetyl-CoA and CO(2). It contains multiple copies of three enzymatic components: pyruvate dehydrogenase (E1), dihydrolipoamide acetyltransferase (E2) and lipoamide dehydrogenase (E3). The protein is Pyruvate dehydrogenase E1 component subunit alpha-1, mitochondrial of Oryza sativa subsp. japonica (Rice).